Reading from the N-terminus, the 137-residue chain is uncharacterized protein (137 aa).

The tract at residues 67–87 is disordered; it reads KSERQHQRVHHELPHDKPRQS. Over residues 70–85 the composition is skewed to basic and acidic residues; the sequence is RQHQRVHHELPHDKPR.

This is an uncharacterized protein from Human cytomegalovirus (strain AD169) (HHV-5).